The sequence spans 334 residues: Phosphate acyltransferase (334 aa).

The protein belongs to the PlsX family. Homodimer. Probably interacts with PlsY.

It localises to the cytoplasm. The catalysed reaction is a fatty acyl-[ACP] + phosphate = an acyl phosphate + holo-[ACP]. Its pathway is lipid metabolism; phospholipid metabolism. Catalyzes the reversible formation of acyl-phosphate (acyl-PO(4)) from acyl-[acyl-carrier-protein] (acyl-ACP). This enzyme utilizes acyl-ACP as fatty acyl donor, but not acyl-CoA. This is Phosphate acyltransferase from Streptococcus thermophilus (strain CNRZ 1066).